Reading from the N-terminus, the 120-residue chain is NAD(P)H-quinone oxidoreductase subunit 3, chloroplastic (120 aa).

Helical transmembrane passes span Ile9–Gly29, Met64–Met84, and Val88–Ser108.

Belongs to the complex I subunit 3 family. NDH is composed of at least 16 different subunits, 5 of which are encoded in the nucleus.

The protein resides in the plastid. It localises to the chloroplast thylakoid membrane. It catalyses the reaction a plastoquinone + NADH + (n+1) H(+)(in) = a plastoquinol + NAD(+) + n H(+)(out). The enzyme catalyses a plastoquinone + NADPH + (n+1) H(+)(in) = a plastoquinol + NADP(+) + n H(+)(out). In terms of biological role, NDH shuttles electrons from NAD(P)H:plastoquinone, via FMN and iron-sulfur (Fe-S) centers, to quinones in the photosynthetic chain and possibly in a chloroplast respiratory chain. The immediate electron acceptor for the enzyme in this species is believed to be plastoquinone. Couples the redox reaction to proton translocation, and thus conserves the redox energy in a proton gradient. The polypeptide is NAD(P)H-quinone oxidoreductase subunit 3, chloroplastic (Piper cenocladum (Ant piper)).